The chain runs to 417 residues: Snake venom metalloproteinase aculysin-1 (417 aa).

Residues 1 to 20 (MIQVLLVTICLAAFPYQGSS) form the signal peptide. Positions 21–189 (IMLESGKVND…KKPSWLNLTP (169 aa)) are excised as a propeptide. A Peptidase M12B domain is found at 197–392 (TSVNLQLIVD…KKPKCIHKKS (196 aa)). 3 disulfide bridges follow: Cys-308/Cys-387, Cys-349/Cys-371, and Cys-351/Cys-354. His-333 contributes to the Zn(2+) binding site. Residue Glu-334 is part of the active site. 2 residues coordinate Zn(2+): His-337 and His-343. Positions 393–417 (LKTDTVSTSVSGNEPLDDNVDGFHA) are excised as a propeptide. A disordered region spans residues 398 to 417 (VSTSVSGNEPLDDNVDGFHA). The segment covering 407 to 417 (PLDDNVDGFHA) has biased composition (acidic residues).

Belongs to the venom metalloproteinase (M12B) family. P-I subfamily. In terms of assembly, monomer. Zn(2+) is required as a cofactor. Expressed by the venom gland.

The protein resides in the secreted. Its function is as follows. This protein is an alkaline zinc metalloprotease from snake venom that possesses weak hemorrhagic activity. This Deinagkistrodon acutus (Hundred-pace snake) protein is Snake venom metalloproteinase aculysin-1.